An 865-amino-acid polypeptide reads, in one-letter code: DNA topoisomerase 3-beta (865 aa).

A Toprim domain is found at 6–151 (RVLMVAEKPS…KVYRARFSSV (146 aa)). Glutamate 12, aspartate 116, and aspartate 118 together coordinate Mg(2+). A Topo IA-type catalytic domain is found at 167 to 587 (NRDEALAVDA…HVIQQFRRKF (421 aa)). The tract at residues 209–214 (SYGPCQ) is interaction with DNA. The active-site O-(5'-phospho-DNA)-tyrosine intermediate is the tyrosine 331. Positions 833–853 (RRGGRGRGRGRGRGRGGRRGS) are enriched in basic residues. Residues 833–865 (RRGGRGRGRGRGRGRGGRRGSKSVDPKMSFRDF) form a disordered region. The segment covering 854-865 (KSVDPKMSFRDF) has biased composition (basic and acidic residues).

Belongs to the type IA topoisomerase family. Mg(2+) serves as cofactor.

The catalysed reaction is ATP-independent breakage of single-stranded DNA, followed by passage and rejoining.. Its function is as follows. Releases the supercoiling and torsional tension of DNA introduced during the DNA replication and transcription by transiently cleaving and rejoining one strand of the DNA duplex. Introduces a single-strand break via transesterification at a target site in duplex DNA. The scissile phosphodiester is attacked by the catalytic tyrosine of the enzyme, resulting in the formation of a DNA-(5'-phosphotyrosyl)-enzyme intermediate and the expulsion of a 3'-OH DNA strand. The free DNA strand than undergoes passage around the unbroken strand thus removing DNA supercoils. Finally, in the religation step, the DNA 3'-OH attacks the covalent intermediate to expel the active-site tyrosine and restore the DNA phosphodiester backbone. The polypeptide is DNA topoisomerase 3-beta (Arabidopsis thaliana (Mouse-ear cress)).